Here is a 36-residue protein sequence, read N- to C-terminus: Conotoxin Bt11.4 (36 aa).

Intrachain disulfides connect cysteine 2-cysteine 16, cysteine 9-cysteine 21, cysteine 15-cysteine 26, and cysteine 20-cysteine 33.

Belongs to the conotoxin I1 superfamily. Expressed by the venom duct.

It localises to the secreted. The chain is Conotoxin Bt11.4 from Conus betulinus (Beech cone).